We begin with the raw amino-acid sequence, 121 residues long: ATP synthase epsilon chain (121 aa).

It belongs to the ATPase epsilon chain family. F-type ATPases have 2 components, CF(1) - the catalytic core - and CF(0) - the membrane proton channel. CF(1) has five subunits: alpha(3), beta(3), gamma(1), delta(1), epsilon(1). CF(0) has three main subunits: a, b and c.

The protein localises to the cell membrane. Functionally, produces ATP from ADP in the presence of a proton gradient across the membrane. This chain is ATP synthase epsilon chain (atpC), found in Mycobacterium bovis (strain ATCC BAA-935 / AF2122/97).